The following is a 388-amino-acid chain: Probable mannan endo-1,4-beta-mannosidase A-1 (388 aa).

A signal peptide spans 1-20 (MKLSPLMALAGLASAQLALA). Substrate is bound by residues tryptophan 93 and asparagine 206. Glutamate 207 (proton donor) is an active-site residue. Asparagine 264 is a glycosylation site (N-linked (GlcNAc...) asparagine). Residue tyrosine 282 participates in substrate binding. The active-site Nucleophile is glutamate 315. N-linked (GlcNAc...) asparagine glycosylation occurs at asparagine 335. Tryptophan 345 provides a ligand contact to substrate.

It belongs to the glycosyl hydrolase 5 (cellulase A) family.

Its subcellular location is the secreted. The enzyme catalyses Random hydrolysis of (1-&gt;4)-beta-D-mannosidic linkages in mannans, galactomannans and glucomannans.. Functionally, endo-1,4-mannanase, a crucial enzyme for depolymerization of seed galactomannans and wood galactoglucomannans. This Aspergillus terreus (strain NIH 2624 / FGSC A1156) protein is Probable mannan endo-1,4-beta-mannosidase A-1 (manA-1).